We begin with the raw amino-acid sequence, 340 residues long: Immunoglobulin-binding protein 1 (340 aa).

A UIM domain is found at 47 to 61 (LELLEKAAGMLSQLD). Residues 99-203 (RLDHLQRARE…YLLHLRRWIG (105 aa)) are interaction with PPP2CA. 2 disordered regions span residues 221–242 (DKDS…PPMK) and 281–340 (LPDR…QNMG). Residues 226–291 (REESACQSSL…PDRGIAKPPS (66 aa)) are interaction with MID1. Lysine 242 bears the N6-acetyllysine mark. Low complexity predominate over residues 292–301 (ADFQRAAQQQ). Positions 302–312 (EDQEQKDEENE) are enriched in acidic residues. Basic and acidic residues predominate over residues 313 to 330 (EKALHRMREWDDWKDTHP).

The protein belongs to the IGBP1/TAP42 family. Interacts with partially folded PPP2CA, but not with the fully active protein. Interacts with PPP2CB, and with PP4 and PP6. Interacts with MID1 and MID2. Interacts with ubiquitin. In terms of processing, phosphorylated. Post-translationally, monoubiquitination by MID1 triggers calpain-mediated cleavage and switches IGBP1 activity from protective to destructive.

Its subcellular location is the cytoplasm. Functionally, associated to surface IgM-receptor; may be involved in signal transduction. Involved in regulation of the catalytic activity of the phosphatases PP2A, PP4 and PP6 by protecting their partially folded catalytic subunits from degradative polyubiquitination until they associate with regulatory subunits. The polypeptide is Immunoglobulin-binding protein 1 (Igbp1) (Rattus norvegicus (Rat)).